Consider the following 107-residue polypeptide: Heme-degrading monooxygenase (107 aa).

Residues 2 to 93 (VIVANKTLIR…DYILGNEIEF (92 aa)) enclose the ABM domain. Asparagine 6 contributes to the Fe cation binding site. A heme-binding site is contributed by histidine 76.

Belongs to the antibiotic biosynthesis monooxygenase family. Heme-degrading monooxygenase IsdG subfamily. In terms of assembly, homodimer.

Its subcellular location is the cytoplasm. It catalyses the reaction heme b + 3 reduced [NADPH--hemoprotein reductase] + 3 O2 = biliverdin IXalpha + CO + Fe(2+) + 3 oxidized [NADPH--hemoprotein reductase] + 3 H2O + H(+). Functionally, allows bacterial pathogens to use the host heme as an iron source. Catalyzes the oxidative degradation of the heme macrocyclic porphyrin ring to the biliverdin in the presence of a suitable electron donor such as ascorbate or NADPH--cytochrome P450 reductase, with subsequent release of free iron. The chain is Heme-degrading monooxygenase from Shouchella clausii (strain KSM-K16) (Alkalihalobacillus clausii).